The chain runs to 914 residues: Isoleucine--tRNA ligase (914 aa).

The short motif at 64–74 is the 'HIGH' region element; that stretch reads PYANGNFHLGH. An L-isoleucyl-5'-AMP-binding site is contributed by glutamate 557. The 'KMSKS' region motif lies at 598 to 602; it reads PMSKS. Lysine 601 serves as a coordination point for ATP. The Zn(2+) site is built by cysteine 889, cysteine 892, cysteine 906, and cysteine 909.

Belongs to the class-I aminoacyl-tRNA synthetase family. IleS type 1 subfamily. As to quaternary structure, monomer. It depends on Zn(2+) as a cofactor.

Its subcellular location is the cytoplasm. It catalyses the reaction tRNA(Ile) + L-isoleucine + ATP = L-isoleucyl-tRNA(Ile) + AMP + diphosphate. Functionally, catalyzes the attachment of isoleucine to tRNA(Ile). As IleRS can inadvertently accommodate and process structurally similar amino acids such as valine, to avoid such errors it has two additional distinct tRNA(Ile)-dependent editing activities. One activity is designated as 'pretransfer' editing and involves the hydrolysis of activated Val-AMP. The other activity is designated 'posttransfer' editing and involves deacylation of mischarged Val-tRNA(Ile). The polypeptide is Isoleucine--tRNA ligase (Leptospira interrogans serogroup Icterohaemorrhagiae serovar Lai (strain 56601)).